Here is a 252-residue protein sequence, read N- to C-terminus: UPF0736 protein OB1207 (252 aa).

This sequence belongs to the UPF0736 family.

In Oceanobacillus iheyensis (strain DSM 14371 / CIP 107618 / JCM 11309 / KCTC 3954 / HTE831), this protein is UPF0736 protein OB1207.